We begin with the raw amino-acid sequence, 179 residues long: Alpha-tubulin N-acetyltransferase (179 aa).

One can recognise an N-acetyltransferase domain in the interval 1–175 (MRVEVVRAPG…NRFVVFDAYF (175 aa)). Acetyl-CoA contacts are provided by residues 109–122 (FYVD…GVGL) and 145–154 (SPKLFAFLKK).

The protein belongs to the acetyltransferase ATAT1 family.

The enzyme catalyses L-lysyl-[alpha-tubulin] + acetyl-CoA = N(6)-acetyl-L-lysyl-[alpha-tubulin] + CoA + H(+). Functionally, specifically acetylates 'Lys-40' in alpha-tubulin on the lumenal side of microtubules. Promotes microtubule destabilization and accelerates microtubule dynamics; this activity may be independent of acetylation activity. Acetylates alpha-tubulin with a slow enzymatic rate, due to a catalytic site that is not optimized for acetyl transfer. Enters the microtubule through each end and diffuses quickly throughout the lumen of microtubules. Acetylates only long/old microtubules because of its slow acetylation rate since it does not have time to act on dynamically unstable microtubules before the enzyme is released. This is Alpha-tubulin N-acetyltransferase from Phytophthora infestans (strain T30-4) (Potato late blight agent).